A 208-amino-acid chain; its full sequence is Intraflagellar transport protein 43 homolog (208 aa).

The residue at position 1 (methionine 1) is an N-acetylmethionine. The tract at residues 18-65 (SRAKMGRRAQQESAQAENHLNGKNSSLTLTGETSSAKLPRCRQGGWAG) is disordered. The span at 28 to 53 (QESAQAENHLNGKNSSLTLTGETSSA) shows a compositional bias: polar residues. Serine 78 carries the post-translational modification Phosphoserine.

It belongs to the IFT43 family. In terms of assembly, component of the IFT complex A (IFT-A) complex. IFT-A complex is divided into a core subcomplex composed of IFT122:IFT140:WDR19 which is associated with TULP3 and a peripheral subcomplex composed of IFT43:WDR35:TTC21B. Interacts directy with IFT122, WDR35 and TTC21B. As to expression, expressed in the retina, predominantly in the photoreceptor outer segment.

The protein localises to the cytoplasm. The protein resides in the cytoskeleton. It is found in the cell projection. Its subcellular location is the cilium. In terms of biological role, as a component of IFT complex A (IFT-A), a complex required for retrograde ciliary transport and entry into cilia of G protein-coupled receptors (GPCRs), it is involved in ciliogenesis. Involved in retrograde ciliary transport along microtubules from the ciliary tip to the base. The polypeptide is Intraflagellar transport protein 43 homolog (Homo sapiens (Human)).